We begin with the raw amino-acid sequence, 394 residues long: MSKSDFWILSVPSRGGSNADLCDDIERLLVSGSTSLISTVAPFDVPPFKVESLDVLISQSEQLTKQDAQCASAISKISDIIKNTVSSSSGDLKDYFMVQDKSPLEYVSSFAWNSSRFHMNKTISEISDRITSEIISFENDIRTRQTSFQQASSAFQNMQKKQSGNLSQKSLANIVHEEDVVHGSDYLTNVFIAVPLNLEKQFLNSYETLTDLVIPRSAKKLDQDSEFVLYTVVVFKKTADSFITKAREAKYTIREFTFEQGLRETEQSEFDDAAVKEKRMLSSLLRYASIAFSESFQGWIHLKCLCVYVESILRYGLPPDFSSVIFQPMAKSEVKIKNILLSKYAYLAQNPVGNNKVKNVDSSAGLDESMADLNLDEEYLPFVLFTVPSKVFNY.

Phosphoserine is present on Ser17.

This sequence belongs to the V-ATPase C subunit family. V-ATPase is a heteromultimeric enzyme composed of a peripheral catalytic V1 complex (components A to H) attached to an integral membrane V0 proton pore complex (components: a, c, c', c'', d, e, f and VOA1).

The protein resides in the cytoplasm. Its subcellular location is the vacuole membrane. Its function is as follows. Subunit of the V1 complex of vacuolar(H+)-ATPase (V-ATPase), a multisubunit enzyme composed of a peripheral complex (V1) that hydrolyzes ATP and a membrane integral complex (V0) that translocates protons. V-ATPase is responsible for acidifying and maintaining the pH of intracellular compartments. Subunit C is necessary for the assembly of the catalytic sector of the enzyme and is likely to have a specific function in its catalytic activity. Reversibly leaves the enzyme after glucose depletion, causing the catalytic subcomplex V1 to detach from the V0 section. This chain is V-type proton ATPase subunit C, found in Schizosaccharomyces pombe (strain 972 / ATCC 24843) (Fission yeast).